The sequence spans 85 residues: U4-theraphotoxin-Hhn1a (85 aa).

The N-terminal stretch at 1 to 22 is a signal peptide; the sequence is MKVTLIAILTCATVLVLHTTAA. A propeptide spanning residues 23 to 48 is cleaved from the precursor; sequence EELEAESQLMEVGMPDTELAAVDEER. Cystine bridges form between C52-C66, C56-C77, and C71-C82.

This sequence belongs to the neurotoxin 12 (Hwtx-2) family. 02 (Hwtx-2) subfamily. Monomer. In terms of tissue distribution, expressed by the venom gland.

It localises to the secreted. In terms of biological role, neurotoxin active on both insects and mammals. This is U4-theraphotoxin-Hhn1a from Cyriopagopus hainanus (Chinese bird spider).